The chain runs to 153 residues: Calmodulin-like protein 4 (153 aa).

EF-hand domains are found at residues 8-43, 44-79, 81-116, and 117-152; these read DAIQ…LGTC, PTPG…QQKQ, DPEN…MGEK, and LTPE…PVPD.

Belongs to the calmodulin family. As to quaternary structure, associates with the IMAC/intermicrovillar adhesion complex.

It is found in the cell projection. The protein localises to the microvillus. Functionally, as part of the intermicrovillar adhesion complex/IMAC plays a role in epithelial brush border differentiation, controlling microvilli organization and length. Acts as a light chain for MYO7B and is required for efficient targeting of the IMAC to the tips of border brush microvilli. This Xenopus tropicalis (Western clawed frog) protein is Calmodulin-like protein 4 (calml4).